We begin with the raw amino-acid sequence, 117 residues long: uncharacterized protein (117 aa).

Positions methionine 1–aspartate 12 are enriched in polar residues. 2 disordered regions span residues methionine 1–alanine 30 and valine 43–proline 87.

This is an uncharacterized protein from Mus musculus (Mouse).